The sequence spans 104 residues: Large ribosomal subunit protein bL21 (104 aa).

This sequence belongs to the bacterial ribosomal protein bL21 family. In terms of assembly, part of the 50S ribosomal subunit. Contacts protein L20.

This protein binds to 23S rRNA in the presence of protein L20. The sequence is that of Large ribosomal subunit protein bL21 from Streptococcus mutans serotype c (strain ATCC 700610 / UA159).